The following is a 157-amino-acid chain: SsrA-binding protein (157 aa).

The protein belongs to the SmpB family.

It localises to the cytoplasm. Required for rescue of stalled ribosomes mediated by trans-translation. Binds to transfer-messenger RNA (tmRNA), required for stable association of tmRNA with ribosomes. tmRNA and SmpB together mimic tRNA shape, replacing the anticodon stem-loop with SmpB. tmRNA is encoded by the ssrA gene; the 2 termini fold to resemble tRNA(Ala) and it encodes a 'tag peptide', a short internal open reading frame. During trans-translation Ala-aminoacylated tmRNA acts like a tRNA, entering the A-site of stalled ribosomes, displacing the stalled mRNA. The ribosome then switches to translate the ORF on the tmRNA; the nascent peptide is terminated with the 'tag peptide' encoded by the tmRNA and targeted for degradation. The ribosome is freed to recommence translation, which seems to be the essential function of trans-translation. This Methylobacterium nodulans (strain LMG 21967 / CNCM I-2342 / ORS 2060) protein is SsrA-binding protein.